A 285-amino-acid chain; its full sequence is 4-diphosphocytidyl-2-C-methyl-D-erythritol kinase (285 aa).

The active site involves K11. 93-103 (PLAAGLAGGSA) is an ATP binding site. The active site involves D135.

This sequence belongs to the GHMP kinase family. IspE subfamily.

The enzyme catalyses 4-CDP-2-C-methyl-D-erythritol + ATP = 4-CDP-2-C-methyl-D-erythritol 2-phosphate + ADP + H(+). Its pathway is isoprenoid biosynthesis; isopentenyl diphosphate biosynthesis via DXP pathway; isopentenyl diphosphate from 1-deoxy-D-xylulose 5-phosphate: step 3/6. In terms of biological role, catalyzes the phosphorylation of the position 2 hydroxy group of 4-diphosphocytidyl-2C-methyl-D-erythritol. The chain is 4-diphosphocytidyl-2-C-methyl-D-erythritol kinase from Moorella thermoacetica (strain ATCC 39073 / JCM 9320).